A 302-amino-acid chain; its full sequence is MTSQGDTTSGTQLKPPVEAVRSHYDKSNEFFKLWLDPSMTYSCAYFERPDMTLEEAQYAKRKLALDKLNLEPGMTLLDIGCGWGSTMRHAVAEYDVNVIGLTLSENQYAHDKAMFDEVDSPRRKEVRIQGWEEFDEPVDRIVSLGAFEHFADGAGDAGFERYDTFFKKFYNLTPDDGRMLLHTITIPDKEEAQELGLTSPMSLLRFIKFILTEIFPGGRLPRISQVDYYSSNAGWKVERYHRIGANYVPTLNAWADALQAHKDEAIALKGQETYDIYMHYLRGCSDLFRDKYTDVCQFTLVK.

S-adenosyl-L-methionine-binding positions include 41–42, 76–84, 102–107, and 131–132; these read YS, LLDIGCGWG, TLSENQ, and WE. Cysteine 284 is an active-site residue.

This sequence belongs to the CFA/CMAS family. As to quaternary structure, homodimer.

It localises to the cytoplasm. It catalyses the reaction a 1-acyl-2-(9Z)-enoyl-sn-glycero-3-phospholipid + S-adenosyl-L-methionine = a 1-acyl-2-(9-cyclopronane)-acyl-sn-glycero-3-phospholipid + S-adenosyl-L-homocysteine + H(+). It functions in the pathway lipid metabolism; mycolic acid biosynthesis. Its function is as follows. Catalyzes the formation of trans cyclopropanated ketomycolate or methoxymycolate through the conversion of a double bond to a cyclopropane ring at the proximal position of an oxygenated mycolic acid via the transfer of a methylene group from S-adenosyl-L-methionine. In the absence of MmaA2, CmaA2 has a non-specific cis-cyclopropanating activity and is able to catalyze the conversion of a double bond to a cis cyclopropane ring at the distal position of an alpha mycolic acid. Cyclopropanated mycolic acids are key factors participating in cell envelope permeability, host immunomodulation and persistence. The polypeptide is Cyclopropane mycolic acid synthase 2 (cmaA2) (Mycobacterium bovis (strain ATCC BAA-935 / AF2122/97)).